The following is a 116-amino-acid chain: uncharacterized protein (116 aa).

The N-acetylmuramoyl-L-alanine amidase domain maps to 2-73 (DGSVGTGRQV…PKALICGHRD (72 aa)).

The protein to phage T3 and T7 N-acetylmuramoyl-L-alanine amidases.

This is an uncharacterized protein from Haemophilus influenzae (strain ATCC 51907 / DSM 11121 / KW20 / Rd).